The chain runs to 573 residues: Delta 8-(E)-sphingolipid desaturase (573 aa).

The Cytochrome b5 heme-binding domain occupies 2-77 (SRVLSRRDIA…FKIWKIGRID (76 aa)). Heme is bound by residues histidine 37 and histidine 60. A helical transmembrane segment spans residues 228 to 248 (LFGISFYLLSLKWFAISAICL). The Histidine box-1 motif lies at 260-264 (HDAGH). A helical membrane pass occupies residues 273–293 (VDNIIGMTVASWIGGLSLGWW). The Histidine box-2 motif lies at 297 to 301 (HDVHH). A run of 3 helical transmembrane segments spans residues 353–372 (YLYYPILCFGRFNLYRLSWM), 393–413 (LAELSFFNYWFFYLIIYKQMP), and 422–442 (VMISHIATMIVHVQITLSHFA). A Histidine box-3 motif is present at residues 481–485 (QVIHH).

The protein belongs to the fatty acid desaturase type 1 family.

The protein localises to the membrane. It catalyses the reaction an N-acylsphing-4-enine + 2 Fe(II)-[cytochrome b5] + O2 + 2 H(+) = a (4E,8E)-4-sphinga-4,8-dienine ceramide + 2 Fe(III)-[cytochrome b5] + 2 H2O. The protein operates within lipid metabolism; sphingolipid metabolism. In terms of biological role, delta(8)-fatty-acid desaturase which introduces a double bond at the 8-position in the long-chain base (LCB) of ceramides. Required for the formation of the di-unsaturated sphingoid base (E,E)-sphinga-4,8-dienine during glucosylceramide (GluCer) biosynthesis. The chain is Delta 8-(E)-sphingolipid desaturase from Kluyveromyces lactis (Yeast).